The chain runs to 398 residues: MAKLTVKDVDLKGKKVLVRVDFNVPLKDGVITNDNRITAALPTIKYIIEQGGRAILFSHLGRVKEEADKAGKSLAPVAADLAAKLGQDVVFPGVTRGAELEAAINALEDGQVLLVENTRYEDVDGKKESKNDPELGKYWASLGDGIFVNDAFGTAHRAHASNVGISANVEKAVAGFLLENEIAYIQEAVETPERPFVAILGGSKVSDKIGVIENLLEKADKVLIGGGMTYTFYKAQGIEIGNSLVEEDKLDVAKALLEKANGKLILPVDSKEANAFAGYTEVRDTEGEAVSEGFLGLDIGPKSIAKFDEALTGAKTVVWNGPMGVFENPDFQAGTIGVMDAIVKQPGVKSIIGGGDSAAAAINLGRADKFSWISTGGGASMELLEGKVLPGLAALTEK.

Substrate is bound by residues 21-23 (DFN), arginine 36, 59-62 (HLGR), arginine 119, and arginine 157. Residues lysine 208, glycine 296, glutamate 327, and 354-357 (GGDS) each bind ATP.

Belongs to the phosphoglycerate kinase family. Monomer.

The protein localises to the cytoplasm. It catalyses the reaction (2R)-3-phosphoglycerate + ATP = (2R)-3-phospho-glyceroyl phosphate + ADP. It functions in the pathway carbohydrate degradation; glycolysis; pyruvate from D-glyceraldehyde 3-phosphate: step 2/5. In Streptococcus pneumoniae (strain Taiwan19F-14), this protein is Phosphoglycerate kinase.